The sequence spans 284 residues: D-tagatose-1,6-bisphosphate aldolase subunit GatY (284 aa).

The active-site Proton donor is the Asp82. His83 and His180 together coordinate Zn(2+). Gly181 is a binding site for dihydroxyacetone phosphate. Residue His208 coordinates Zn(2+). Dihydroxyacetone phosphate is bound by residues 209–211 and 230–233; these read GAS and NVAT.

It belongs to the class II fructose-bisphosphate aldolase family. TagBP aldolase GatY subfamily. Forms a complex with GatZ. Zn(2+) serves as cofactor.

It carries out the reaction D-tagatofuranose 1,6-bisphosphate = D-glyceraldehyde 3-phosphate + dihydroxyacetone phosphate. It functions in the pathway carbohydrate metabolism; D-tagatose 6-phosphate degradation; D-glyceraldehyde 3-phosphate and glycerone phosphate from D-tagatose 6-phosphate: step 2/2. Functionally, catalytic subunit of the tagatose-1,6-bisphosphate aldolase GatYZ, which catalyzes the reversible aldol condensation of dihydroxyacetone phosphate (DHAP or glycerone-phosphate) with glyceraldehyde 3-phosphate (G3P) to produce tagatose 1,6-bisphosphate (TBP). Requires GatZ subunit for full activity and stability. Is involved in the catabolism of galactitol. This Salmonella typhi protein is D-tagatose-1,6-bisphosphate aldolase subunit GatY.